A 794-amino-acid polypeptide reads, in one-letter code: EVI5-like protein (794 aa).

Residues 1-30 are compositionally biased toward polar residues; it reads MASPTLSPDSSSQEALSAPTCSPTSDSENL. Disordered regions lie at residues 1–36 and 49–75; these read MASPTLSPDSSSQEALSAPTCSPTSDSENLSPDELE and EADSKSMRSMNGSRRNSGSSLVSSSSA. Over residues 55–75 the composition is skewed to low complexity; sequence MRSMNGSRRNSGSSLVSSSSA. Residues 115 to 300 enclose the Rab-GAP TBC domain; sequence GIPHHFRAIV…RVFDIFMYEG (186 aa). 2 coiled-coil regions span residues 358–449 and 569–709; these read KKMK…QQEN and EAQA…LKGP. At Ser-685 the chain carries Phosphoserine. Residues 766-794 form a disordered region; the sequence is LERPAKDSEGSSDSDADELAAPYSQGLDN.

May interact with RAB10.

In terms of biological role, functions as a GTPase-activating protein (GAP) with a broad specificity. The chain is EVI5-like protein (EVI5L) from Homo sapiens (Human).